A 553-amino-acid chain; its full sequence is Formate--tetrahydrofolate ligase (553 aa).

65–72 lines the ATP pocket; it reads TPAGEGKS.

This sequence belongs to the formate--tetrahydrofolate ligase family.

It catalyses the reaction (6S)-5,6,7,8-tetrahydrofolate + formate + ATP = (6R)-10-formyltetrahydrofolate + ADP + phosphate. The protein operates within one-carbon metabolism; tetrahydrofolate interconversion. This is Formate--tetrahydrofolate ligase from Brachyspira hyodysenteriae (strain ATCC 49526 / WA1).